Here is a 553-residue protein sequence, read N- to C-terminus: Undecaprenyl phosphate-alpha-4-amino-4-deoxy-L-arabinose arabinosyl transferase (553 aa).

The next 12 helical transmembrane spans lie at 8-28 (LLFS…RALW), 81-101 (FAVR…VYWL), 113-133 (LLSA…SYAV), 136-156 (PMVT…AQSA), 176-196 (LMTK…PWMI), 204-224 (LLLF…PWAI), 255-275 (APFW…VGLL), 289-309 (NSGS…FSLA), 313-333 (LPTY…HHGI), 351-371 (VAFG…WGLV), 384-404 (VLLG…CLVA), and 412-432 (AALC…DKVI).

Belongs to the glycosyltransferase 83 family.

The protein resides in the cell inner membrane. It catalyses the reaction 4-amino-4-deoxy-alpha-L-arabinopyranosyl di-trans,octa-cis-undecaprenyl phosphate + lipid IVA = lipid IIA + di-trans,octa-cis-undecaprenyl phosphate.. It functions in the pathway lipopolysaccharide metabolism; 4-amino-4-deoxy-beta-L-arabinose-lipid A biosynthesis. Its function is as follows. Catalyzes the transfer of the L-Ara4N moiety of the glycolipid undecaprenyl phosphate-alpha-L-Ara4N to lipid A. The modified arabinose is attached to lipid A and is required for resistance to polymyxin and cationic antimicrobial peptides. The chain is Undecaprenyl phosphate-alpha-4-amino-4-deoxy-L-arabinose arabinosyl transferase from Erwinia tasmaniensis (strain DSM 17950 / CFBP 7177 / CIP 109463 / NCPPB 4357 / Et1/99).